The primary structure comprises 102 residues: Circadian clock oscillator protein KaiA (102 aa).

The region spanning 1–102 (MTQEVDQQIL…CEAYRGAIFK (102 aa)) is the KaiA C-terminal domain.

This sequence belongs to the KaiA family. In terms of assembly, homodimer. The KaiABC complex composition changes during the circadian cycle to control KaiC phosphorylation. Complexes KaiC(6), KaiA(2-4):KaiC(6), KaiB(6):KaiC(6) and KaiC(6):KaiB(6):KaiA(12) are among the most important forms, many form cooperatively. KaiA and CikA bind to the same region of the KaiB(fs) form and therefore compete.

Key component of the KaiABC oscillator complex, which constitutes the main circadian regulator in cyanobacteria. Complex composition changes during the circadian cycle to control KaiC phosphorylation. KaiA stimulates KaiC autophosphorylation, while KaiB sequesters KaiA, leading to KaiC autodephosphorylation. KaiA binding to the KaiC CII domain during the subjective day yields KaiA(2-4):KaiC(6) complexes which stimulate KaiC autophosphorylation. Phospho-Ser-431 KaiC accumulation triggers binding of KaiB during the subjective night to form the KaiB(6):KaiC(6) complex, leading to changes in the output regulators CikA and SasA. KaiB(6):KaiC(6) formation exposes a site for KaiA binding on KaiB that sequesters KaiA from KaiC's CII domain, making the KaiC(6):KaiB(6):KaiA(12) complex resulting in KaiC autodephosphorylation. Complete dephosphorylation of KaiC leads to dissociation of KaiA(2):KaiB(1), completing 1 cycle of the Kai oscillator. The chain is Circadian clock oscillator protein KaiA from Nostoc sp. (strain PCC 7120 / SAG 25.82 / UTEX 2576).